Consider the following 231-residue polypeptide: Lipoprotein-releasing system ATP-binding protein LolD (231 aa).

The ABC transporter domain maps to 11 to 231; it reads LRLEGLTRRF…TLRDGKLVPF (221 aa). 47 to 54 provides a ligand contact to ATP; sequence APSGTGKS.

It belongs to the ABC transporter superfamily. Lipoprotein translocase (TC 3.A.1.125) family. In terms of assembly, the complex is composed of two ATP-binding proteins (LolD) and two transmembrane proteins (LolC and LolE).

The protein localises to the cell inner membrane. Part of the ABC transporter complex LolCDE involved in the translocation of mature outer membrane-directed lipoproteins, from the inner membrane to the periplasmic chaperone, LolA. Responsible for the formation of the LolA-lipoprotein complex in an ATP-dependent manner. This chain is Lipoprotein-releasing system ATP-binding protein LolD, found in Gluconobacter oxydans (strain 621H) (Gluconobacter suboxydans).